A 74-amino-acid polypeptide reads, in one-letter code: Translational regulator CsrA (74 aa).

The protein belongs to the CsrA/RsmA family. In terms of assembly, homodimer. The beta-strands of each monomer intercalate to form a hydrophobic core while the alpha-helices form wings that extend away from the core. Two molecules of FliW interact with 1 homodimer. mRNA and FliW bind to different sites on CsrA.

It localises to the cytoplasm. Functionally, a translational regulator that binds mRNA to regulate translation initiation and/or mRNA stability. Usually binds in the 5'-UTR at or near the Shine-Dalgarno sequence preventing ribosome-binding, thus repressing translation. Represses expression of flagellin (hag) in a post-transcriptional fashion. Specifically binds to 2 sites in the 5'-UTR of hag mRNA in a cooperative fashion; the second site overlaps the Shine-Dalgarno sequence and prevents 30S ribosomal subunit binding. Mutation of either binding site abolishes CsrA regulation of hag expression. Repression is greater in the 1A96 than 168 genetic background and higher in minimal than rich medium. Translation repression is antagonized by FliW. Partner switching by flagellin between FliW and CsrA provides a flagellar assembly checkpoint to tightly control the timing of flagellin synthesis. Flagellin binds to assembly factor FliW, freeing CsrA to repress translation of the flagellin mRNA. When the flagellar hook is assembled flagellin is secreted, depleting intracellular flagellin, which frees FliW to interact with CsrA and inhibits CsrA binding to mRNA. This derepresses flagellin translation and provides protein for flagellar assembly. Once the flagellar filament is completed cytoplasmic flagellin levels rise and CsrA translation repression of flagellin reinitiates. Overexpression leads to a dramatic reduction in motility, a significant reduction in flagellin synthesis and reduced flagella assembly. This Bacillus subtilis (strain 168) protein is Translational regulator CsrA.